A 424-amino-acid chain; its full sequence is GTPase Obg (424 aa).

The region spanning 2–158 is the Obg domain; sequence AKFIDQVKIM…YEANIVLKIL (157 aa). The 168-residue stretch at 159–326 folds into the OBG-type G domain; it reads SDVGLVGLPS…LKKIIWEFLE (168 aa). Residues 165–172, 190–194, 211–214, 280–283, and 307–309 contribute to the GTP site; these read GLPSCGKS, FTTLV, DLPG, NKSD, and SAL. Residues Ser-172 and Thr-192 each contribute to the Mg(2+) site. The OCT domain maps to 344–422; sequence KEINYEPDFV…IYQHKFEWEE (79 aa).

It belongs to the TRAFAC class OBG-HflX-like GTPase superfamily. OBG GTPase family. Monomer. It depends on Mg(2+) as a cofactor.

Its subcellular location is the cytoplasm. Functionally, an essential GTPase which binds GTP, GDP and possibly (p)ppGpp with moderate affinity, with high nucleotide exchange rates and a fairly low GTP hydrolysis rate. Plays a role in control of the cell cycle, stress response, ribosome biogenesis and in those bacteria that undergo differentiation, in morphogenesis control. This chain is GTPase Obg, found in Mycoplasmopsis synoviae (strain 53) (Mycoplasma synoviae).